A 1241-amino-acid polypeptide reads, in one-letter code: eIF-2-alpha kinase GCN2 (1241 aa).

Over residues 1 to 15 (MGRSSSKKKKKRGGS) the composition is skewed to basic residues. The tract at residues 1–33 (MGRSSSKKKKKRGGSGRRGQLKDHGSNADEDNE) is disordered. The RWD domain maps to 37–148 (EEITALSAIF…EAAQEFLSEI (112 aa)). The segment at 253–321 (PIAKLNTVQE…SLGSWSSDSL (69 aa)) is disordered. Low complexity-rich tracts occupy residues 267–276 (DTSISSFDSS) and 307–321 (NSES…SDSL). One can recognise a Protein kinase domain in the interval 425–731 (FEELKPLGQG…ATELLKHAFP (307 aa)). Residues 431–439 (LGQGGFGHV) and Lys454 contribute to the ATP site. Residue Asp586 is the Proton acceptor of the active site. The tract at residues 819–1219 (IPMRLLSDCP…ELKKEKVVGR (401 aa)) is histidyl-tRNA synthetase-like.

This sequence belongs to the protein kinase superfamily. Ser/Thr protein kinase family. GCN2 subfamily. Homodimer; homodimerization is important for kinase activation by uncharged tRNAs. In terms of tissue distribution, expressed in roots, leaves, stems, buds, flowers, siliques and seedlings.

It localises to the cytoplasm. It catalyses the reaction L-seryl-[protein] + ATP = O-phospho-L-seryl-[protein] + ADP + H(+). The catalysed reaction is L-threonyl-[protein] + ATP = O-phospho-L-threonyl-[protein] + ADP + H(+). The kinase activity is stimulated upon binding to uncharged tRNAs. Its function is as follows. Metabolic-stress sensing protein kinase that phosphorylates the alpha subunit of eukaryotic translation initiation factor 2 eIF-2-alpha in response to low amino acid availability. Plays a role as an activator of the general amino acid control pathway required for adapatation to amino acid starvation. Converts phosphorylated eIF-2-alpha either to a competitive inhibitor of translation initiation, leading to a global protein synthesis repression, and thus to a reduced overall utilization of amino acids, or to a translational initiation activation of specific mRNAs, and hence allowing reprogramming of amino acid biosynthetic gene expression to alleviate nutrient depletion. Binds uncharged tRNAs. The chain is eIF-2-alpha kinase GCN2 from Arabidopsis thaliana (Mouse-ear cress).